Here is a 141-residue protein sequence, read N- to C-terminus: Acetyltransferase ECA0875 (141 aa).

Residues 1 to 141 (MEIRIFRQDD…GKRLIEDREY (141 aa)) form the N-acetyltransferase domain.

The protein belongs to the acetyltransferase family. YpeA subfamily.

The chain is Acetyltransferase ECA0875 from Pectobacterium atrosepticum (strain SCRI 1043 / ATCC BAA-672) (Erwinia carotovora subsp. atroseptica).